A 206-amino-acid chain; its full sequence is Adenylyl-sulfate kinase (206 aa).

31–38 (GLSASGKS) is a binding site for ATP. Ser105 functions as the Phosphoserine intermediate in the catalytic mechanism.

Belongs to the APS kinase family.

It carries out the reaction adenosine 5'-phosphosulfate + ATP = 3'-phosphoadenylyl sulfate + ADP + H(+). It participates in sulfur metabolism; hydrogen sulfide biosynthesis; sulfite from sulfate: step 2/3. Catalyzes the synthesis of activated sulfate. The sequence is that of Adenylyl-sulfate kinase (sD) from Emericella nidulans (strain FGSC A4 / ATCC 38163 / CBS 112.46 / NRRL 194 / M139) (Aspergillus nidulans).